The following is a 156-amino-acid chain: 6,7-dimethyl-8-ribityllumazine synthase (156 aa).

5-amino-6-(D-ribitylamino)uracil contacts are provided by residues phenylalanine 22, 56 to 58 (AFE), and 80 to 82 (VVI). 85 to 86 (ST) lines the (2S)-2-hydroxy-3-oxobutyl phosphate pocket. Histidine 88 functions as the Proton donor in the catalytic mechanism. Residue phenylalanine 113 participates in 5-amino-6-(D-ribitylamino)uracil binding. Arginine 127 contacts (2S)-2-hydroxy-3-oxobutyl phosphate.

It belongs to the DMRL synthase family.

It catalyses the reaction (2S)-2-hydroxy-3-oxobutyl phosphate + 5-amino-6-(D-ribitylamino)uracil = 6,7-dimethyl-8-(1-D-ribityl)lumazine + phosphate + 2 H2O + H(+). Its pathway is cofactor biosynthesis; riboflavin biosynthesis; riboflavin from 2-hydroxy-3-oxobutyl phosphate and 5-amino-6-(D-ribitylamino)uracil: step 1/2. Catalyzes the formation of 6,7-dimethyl-8-ribityllumazine by condensation of 5-amino-6-(D-ribitylamino)uracil with 3,4-dihydroxy-2-butanone 4-phosphate. This is the penultimate step in the biosynthesis of riboflavin. This chain is 6,7-dimethyl-8-ribityllumazine synthase, found in Streptococcus agalactiae serotype Ia (strain ATCC 27591 / A909 / CDC SS700).